A 369-amino-acid polypeptide reads, in one-letter code: Peptide chain release factor 2 (369 aa).

The residue at position 247 (Q247) is an N5-methylglutamine.

Belongs to the prokaryotic/mitochondrial release factor family. In terms of processing, methylated by PrmC. Methylation increases the termination efficiency of RF2.

It is found in the cytoplasm. Its function is as follows. Peptide chain release factor 2 directs the termination of translation in response to the peptide chain termination codons UGA and UAA. This chain is Peptide chain release factor 2, found in Phenylobacterium zucineum (strain HLK1).